The following is a 406-amino-acid chain: Olfactomedin-like protein 3 (406 aa).

The N-terminal stretch at 1–21 (MGPSTPLLILFLLSWSGPLQG) is a signal peptide. Positions 25 to 101 (HLVEYMERRL…REVDYLETQN (77 aa)) form a coiled coil. An Olfactomedin-like domain is found at 134 to 401 (DCGYTISQVR…QIVYKLEMRK (268 aa)). The cysteines at positions 135 and 328 are disulfide-linked. Asparagine 177 and asparagine 248 each carry an N-linked (GlcNAc...) asparagine glycan.

Belongs to the OLFML3 family. In terms of tissue distribution, abundant in placenta, moderate in liver and heart, whereas fairly weak in other tissues examined. On term placenta, mainly localized extracellularly surrounding the syncytiotrophoblastic cells and very rarely expressed in the maternal decidua layer.

It localises to the secreted. Its function is as follows. Secreted scaffold protein that plays an essential role in dorsoventral patterning during early development. Stabilizes axial formation by restricting chordin (CHRD) activity on the dorsal side. Acts by facilitating the association between the tolloid proteases and their substrate chordin (CHRD), leading to enhance chordin (CHRD) degradation. May have matrix-related function involved in placental and embryonic development, or play a similar role in other physiological processes. This is Olfactomedin-like protein 3 (OLFML3) from Homo sapiens (Human).